The primary structure comprises 189 residues: Large ribosomal subunit protein bL17 (189 aa).

It belongs to the bacterial ribosomal protein bL17 family. In terms of assembly, part of the 50S ribosomal subunit. Contacts protein L32.

This is Large ribosomal subunit protein bL17 from Rhodococcus jostii (strain RHA1).